A 328-amino-acid chain; its full sequence is Probable cell division protein WhiA (328 aa).

Positions 275-308 form a DNA-binding region, H-T-H motif; it reads SLEELGRLAEPPMTKDAVAGRIRRLLSMADKRAE.

This sequence belongs to the WhiA family.

Functionally, involved in cell division and chromosome segregation. The sequence is that of Probable cell division protein WhiA from Corynebacterium jeikeium (strain K411).